A 186-amino-acid polypeptide reads, in one-letter code: Small ribosomal subunit protein uS5 (186 aa).

The 64-residue stretch at 20-83 (FVDKLVHINR…EAAKRDMIFV (64 aa)) folds into the S5 DRBM domain.

Belongs to the universal ribosomal protein uS5 family. Part of the 30S ribosomal subunit. Contacts proteins S4 and S8.

In terms of biological role, with S4 and S12 plays an important role in translational accuracy. Its function is as follows. Located at the back of the 30S subunit body where it stabilizes the conformation of the head with respect to the body. The polypeptide is Small ribosomal subunit protein uS5 (Brucella abortus (strain S19)).